Here is a 553-residue protein sequence, read N- to C-terminus: Probable malate:quinone oxidoreductase (553 aa).

The interval 524-553 is disordered; it reads PPPKIDLGAPSQATGNAPARPAKASADMAL.

Belongs to the MQO family. Requires FAD as cofactor.

The catalysed reaction is (S)-malate + a quinone = a quinol + oxaloacetate. The protein operates within carbohydrate metabolism; tricarboxylic acid cycle; oxaloacetate from (S)-malate (quinone route): step 1/1. The chain is Probable malate:quinone oxidoreductase from Burkholderia cenocepacia (strain HI2424).